The following is an 86-amino-acid chain: Colicin-E9 immunity protein (86 aa).

The protein belongs to the colicins ColE2/ColE8/ColE9 and pyocins S1/S2 family.

This protein is able to protect a cell, which harbors the plasmid ColE9 encoding colicin E9, against colicin E9, it binds specifically to the DNase-type colicin and inhibits its bactericidal activity. The protein is Colicin-E9 immunity protein (imm) of Escherichia coli.